A 696-amino-acid chain; its full sequence is Methionine synthase reductase (696 aa).

The Flavodoxin-like domain maps to 4–147; it reads FLLLYATQRG…VVEPWIDGLW (144 aa). Residues 10–14 and 93–124 contribute to the FMN site; these read TQRGQ and LLGLGDSEYTYFCNGGKVIDKRLQELGAQRFY. Positions 166 to 245 are hinge; it reads TLSRASDAPL…SSLSIPAVPP (80 aa). Phosphoserine is present on residues Ser171 and Ser188. The region spanning 269-531 is the FAD-binding FR-type domain; it reads DPSFQVPISK…PRATNAFHLP (263 aa). Lys289 contributes to the NADP(+) binding site. Residues 449–452 and 485–488 each bind FAD; these read RPYS and GVCT. Residues 608–609, 622–624, and Asp657 each bind NADP(+); these read SR and YVQ. Position 695 (Trp695) interacts with FAD.

In terms of assembly, forms a multiprotein complex with MMACHC, MMADHC and MTR. It depends on FAD as a cofactor. Requires FMN as cofactor.

Its subcellular location is the cytoplasm. The enzyme catalyses 2 methylcob(III)alamin-[methionine synthase] + 2 S-adenosyl-L-homocysteine + NADP(+) + H(+) = 2 cob(II)alamin-[methionine synthase] + 2 S-adenosyl-L-methionine + NADPH. The catalysed reaction is 2 cob(II)alamin + A + 2 H2O + 2 H(+) = 2 aquacob(III)alamin + AH2. Its function is as follows. Key enzyme in methionine and folate homeostasis responsible for the reactivation of methionine synthase (MTR/MS) activity by catalyzing the reductive methylation of MTR-bound cob(II)alamin. Cobalamin (vitamin B12) forms a complex with MTR to serve as an intermediary in methyl transfer reactions that cycles between MTR-bound methylcob(III)alamin and MTR bound-cob(I)alamin forms, and occasional oxidative escape of the cob(I)alamin intermediate during the catalytic cycle leads to the inactive cob(II)alamin species. The processing of cobalamin in the cytosol occurs in a multiprotein complex composed of at least MMACHC, MMADHC, MTRR and MTR which may contribute to shuttle safely and efficiently cobalamin towards MTR in order to produce methionine. Also necessary for the utilization of methyl groups from the folate cycle, thereby affecting transgenerational epigenetic inheritance. Also acts as a molecular chaperone for methionine synthase by stabilizing apoMTR and incorporating methylcob(III)alamin into apoMTR to form the holoenzyme. Also serves as an aquacob(III)alamin reductase by reducing aquacob(III)alamin to cob(II)alamin; this reduction leads to stimulation of the conversion of apoMTR and aquacob(III)alamin to MTR holoenzyme. The sequence is that of Methionine synthase reductase from Mus musculus (Mouse).